A 316-amino-acid polypeptide reads, in one-letter code: Short-chain dehydrogenase/reductase family 16C member 6 (316 aa).

NAD(+) is bound at residue 40-64 (LITGAASGLGRLLAIKFASLGAILV). Residue serine 173 participates in substrate binding. The active-site Proton acceptor is the tyrosine 186.

This sequence belongs to the short-chain dehydrogenases/reductases (SDR) family.

The chain is Short-chain dehydrogenase/reductase family 16C member 6 (SDR16C6) from Bos taurus (Bovine).